The chain runs to 135 residues: MPVDFTGYWKMLANENFEEYLRALDVNVALRKIANLLKPDKEIVQEGDHMIIRTLSTFRNYIMDFQVGKEFEEDLTGIDDRKCMTTVSWDGDKLECVQKGEKEGRGWTQWIEGDELHLEMRVEGVVCKQVFKKVN.

An important for interaction with STRA6 region spans residues 22–32 (RALDVNVALRK). All-trans-retinol contacts are provided by Lys-41, Met-63, and Gln-109.

Belongs to the calycin superfamily. Fatty-acid binding protein (FABP) family. As to quaternary structure, interacts (only as retinol-free apoprotein) with STRA6.

It is found in the cytoplasm. The protein resides in the lipid droplet. In terms of biological role, cytoplasmic retinol-binding protein. Accepts retinol from the transport protein STRA6, and thereby contributes to retinol uptake, storage and retinoid homeostasis. In Bos taurus (Bovine), this protein is Retinol-binding protein 1 (RBP1).